The sequence spans 252 residues: Ditrans,polycis-undecaprenyl-diphosphate synthase ((2E,6E)-farnesyl-diphosphate specific) (252 aa).

Residue D25 is part of the active site. D25 serves as a coordination point for Mg(2+). Residues 26–29 (GNGR), W30, R38, H42, and 70–72 (SSE) each bind substrate. N73 serves as the catalytic Proton acceptor. Substrate contacts are provided by W74, R76, and R193. H198 lines the Mg(2+) pocket. A substrate-binding site is contributed by 199–201 (RIS). E212 is a binding site for Mg(2+).

This sequence belongs to the UPP synthase family. Homodimer. The cofactor is Mg(2+).

It carries out the reaction 8 isopentenyl diphosphate + (2E,6E)-farnesyl diphosphate = di-trans,octa-cis-undecaprenyl diphosphate + 8 diphosphate. Catalyzes the sequential condensation of isopentenyl diphosphate (IPP) with (2E,6E)-farnesyl diphosphate (E,E-FPP) to yield (2Z,6Z,10Z,14Z,18Z,22Z,26Z,30Z,34E,38E)-undecaprenyl diphosphate (di-trans,octa-cis-UPP). UPP is the precursor of glycosyl carrier lipid in the biosynthesis of bacterial cell wall polysaccharide components such as peptidoglycan and lipopolysaccharide. This chain is Ditrans,polycis-undecaprenyl-diphosphate synthase ((2E,6E)-farnesyl-diphosphate specific), found in Salmonella typhi.